Consider the following 349-residue polypeptide: ATP phosphoribosyltransferase regulatory subunit (349 aa).

The segment at 327–349 (GRGRGVRPRRASARGGRARARPR) is disordered. The segment covering 330–349 (RGVRPRRASARGGRARARPR) has biased composition (basic residues).

This sequence belongs to the class-II aminoacyl-tRNA synthetase family. HisZ subfamily. In terms of assembly, heteromultimer composed of HisG and HisZ subunits.

Its subcellular location is the cytoplasm. The protein operates within amino-acid biosynthesis; L-histidine biosynthesis; L-histidine from 5-phospho-alpha-D-ribose 1-diphosphate: step 1/9. In terms of biological role, required for the first step of histidine biosynthesis. May allow the feedback regulation of ATP phosphoribosyltransferase activity by histidine. This is ATP phosphoribosyltransferase regulatory subunit from Anaeromyxobacter dehalogenans (strain 2CP-1 / ATCC BAA-258).